The sequence spans 476 residues: Endonuclease SceI small subunit (476 aa).

The protein belongs to the LAGLIDADG endonuclease family. Endonuclease SceI (Endo.SceI) is a heterodimer of ENS2 and SSC1. The N-terminus is blocked.

It localises to the mitochondrion. In terms of biological role, catalytic component of endonuclease SceI (Endo.SceI), which cleaves specifically at multiple sites on mitochondrial DNA and produces double-stranded breaks. The polypeptide is Endonuclease SceI small subunit (ENS2) (Saccharomyces cerevisiae (Baker's yeast)).